A 294-amino-acid chain; its full sequence is S-adenosylmethionine uptake transporter (294 aa).

Helical transmembrane passes span 8–28 (YLTG…NDVI), 41–61 (VAFF…VYYG), 74–91 (ILRG…TYGL), 98–118 (TATV…VFFL), 121–141 (NIIW…VVTL), 148–168 (FNPE…LDII), 177–197 (SMIS…LPVA), 207–227 (FELA…FFLL), 237–257 (ATAP…YFIF), and 260–280 (FPDK…LFII). EamA domains lie at 21-141 (SSSA…VVTL) and 160-280 (ISFA…LFII).

This sequence belongs to the drug/metabolite transporter (DMT) superfamily. 10 TMS drug/metabolite exporter (DME) (TC 2.A.7.3) family.

The protein resides in the cell inner membrane. Its function is as follows. Transports S-adenosylmethionine. The polypeptide is S-adenosylmethionine uptake transporter (sam) (Rickettsia conorii (strain ATCC VR-613 / Malish 7)).